The sequence spans 238 residues: CFA/I fimbrial subunit A (238 aa).

A signal peptide spans 1–19 (MHKLFYLLSLLMAPFVANA).

Its subcellular location is the fimbrium. In terms of biological role, might function as a shuttle protein in the transport of fimbria through the periplasmic space or might function as an adhesin. This Escherichia coli protein is CFA/I fimbrial subunit A (cfaA).